The sequence spans 570 residues: Cytoplasmic polyadenylation element-binding protein 2 (570 aa).

The 83-residue stretch at 434-516 folds into the RRM domain; that stretch reads LVAFIGGVPR…KRVEIKPYFF (83 aa).

In terms of tissue distribution, expressed specifically in the spermatogenic germ line.

Its function is as follows. Cytoplasmic polyadenylation element binding protein that binds to and regulates the translation of specific mRNAs. Not required for oogenesis. This is Cytoplasmic polyadenylation element-binding protein 2 (cpb-2) from Caenorhabditis elegans.